We begin with the raw amino-acid sequence, 85 residues long: Small ribosomal subunit protein bS16 (85 aa).

This sequence belongs to the bacterial ribosomal protein bS16 family.

The chain is Small ribosomal subunit protein bS16 from Neorickettsia sennetsu (strain ATCC VR-367 / Miyayama) (Ehrlichia sennetsu).